We begin with the raw amino-acid sequence, 151 residues long: Deoxyuridine 5'-triphosphate nucleotidohydrolase (151 aa).

Substrate-binding positions include 70-72 (RSG), asparagine 83, 87-89 (LID), and methionine 97.

It belongs to the dUTPase family. Mg(2+) serves as cofactor.

The catalysed reaction is dUTP + H2O = dUMP + diphosphate + H(+). It functions in the pathway pyrimidine metabolism; dUMP biosynthesis; dUMP from dCTP (dUTP route): step 2/2. This enzyme is involved in nucleotide metabolism: it produces dUMP, the immediate precursor of thymidine nucleotides and it decreases the intracellular concentration of dUTP so that uracil cannot be incorporated into DNA. This is Deoxyuridine 5'-triphosphate nucleotidohydrolase from Tolumonas auensis (strain DSM 9187 / NBRC 110442 / TA 4).